A 364-amino-acid polypeptide reads, in one-letter code: Natterin-3 (364 aa).

The first 18 residues, 1 to 18 (MKLSVLVVTLLAVSWTSA), serve as a signal peptide directing secretion. A propeptide spanning residues 19 to 42 (QPETFSIQTKEANMNPEPANIRVA) is cleaved from the precursor.

This sequence belongs to the natterin family. Contains 4 disulfide bonds. Expressed by the venom gland.

The protein localises to the secreted. With respect to regulation, inhibited by tissue-kallikrein inhibitor TKI and trasylol. Plasma kallikrein inhibitor PKSI527 and classical inhibitors of serine-, metallo-, thiol- or aspartate-peptidases evokes a minor inhibition of the peptide digestion. Its function is as follows. Shows nociceptive, edema-inducing and kininogenase activity with release of kallidin from low molecular weight kininogen. The cleavage occurs at Met-Lys bonds. The chain is Natterin-3 from Thalassophryne nattereri (Copper Joe toadfish).